The following is a 420-amino-acid chain: ATP phosphoribosyltransferase regulatory subunit (420 aa).

The protein belongs to the class-II aminoacyl-tRNA synthetase family. HisZ subfamily. As to quaternary structure, heteromultimer composed of HisG and HisZ subunits.

The protein resides in the cytoplasm. Its pathway is amino-acid biosynthesis; L-histidine biosynthesis; L-histidine from 5-phospho-alpha-D-ribose 1-diphosphate: step 1/9. Required for the first step of histidine biosynthesis. May allow the feedback regulation of ATP phosphoribosyltransferase activity by histidine. This is ATP phosphoribosyltransferase regulatory subunit from Bacillus mycoides (strain KBAB4) (Bacillus weihenstephanensis).